The chain runs to 338 residues: MTTVQEAVPNLIPTQDVTPRPAPKKVEAGVKLRGAEKVARIPVKIIPTEELPKKPDWIRVRIPVSPEVDRIKQLLRKHKLHSVCEEASCPNLGECFSGGTATFMIMGDICTRRCPFCDVGHGRPKPLDLDEPKNLAIAIADLRLKYVVITSVDRDDLRDGGAQHFADCIREIRALSPGVQLETLVPDYRGRMDVALEITAQTPPDVFNHNLETVPRLYKAARPGSDYDWSLDLLQKFKQMVPHVPTKSGLMLGLGETDEEVIEVMHRMREHDIDMLTLGQYLQPSRNHLPVQRFVHPDTFAWFAEEGYKMGFKNVASGPLVRSSYHADQQAHEAKIKL.

Positions 1 to 22 (MTTVQEAVPNLIPTQDVTPRPA) are disordered. The [4Fe-4S] cluster site is built by cysteine 84, cysteine 89, cysteine 95, cysteine 110, cysteine 114, cysteine 117, and serine 324. One can recognise a Radical SAM core domain in the interval 96 to 313 (FSGGTATFMI…AEEGYKMGFK (218 aa)).

Belongs to the radical SAM superfamily. Lipoyl synthase family. [4Fe-4S] cluster serves as cofactor.

The protein resides in the cytoplasm. The catalysed reaction is [[Fe-S] cluster scaffold protein carrying a second [4Fe-4S](2+) cluster] + N(6)-octanoyl-L-lysyl-[protein] + 2 oxidized [2Fe-2S]-[ferredoxin] + 2 S-adenosyl-L-methionine + 4 H(+) = [[Fe-S] cluster scaffold protein] + N(6)-[(R)-dihydrolipoyl]-L-lysyl-[protein] + 4 Fe(3+) + 2 hydrogen sulfide + 2 5'-deoxyadenosine + 2 L-methionine + 2 reduced [2Fe-2S]-[ferredoxin]. It functions in the pathway protein modification; protein lipoylation via endogenous pathway; protein N(6)-(lipoyl)lysine from octanoyl-[acyl-carrier-protein]: step 2/2. Catalyzes the radical-mediated insertion of two sulfur atoms into the C-6 and C-8 positions of the octanoyl moiety bound to the lipoyl domains of lipoate-dependent enzymes, thereby converting the octanoylated domains into lipoylated derivatives. This Pseudomonas entomophila (strain L48) protein is Lipoyl synthase.